Consider the following 150-residue polypeptide: SsrA-binding protein (150 aa).

This sequence belongs to the SmpB family.

The protein resides in the cytoplasm. In terms of biological role, required for rescue of stalled ribosomes mediated by trans-translation. Binds to transfer-messenger RNA (tmRNA), required for stable association of tmRNA with ribosomes. tmRNA and SmpB together mimic tRNA shape, replacing the anticodon stem-loop with SmpB. tmRNA is encoded by the ssrA gene; the 2 termini fold to resemble tRNA(Ala) and it encodes a 'tag peptide', a short internal open reading frame. During trans-translation Ala-aminoacylated tmRNA acts like a tRNA, entering the A-site of stalled ribosomes, displacing the stalled mRNA. The ribosome then switches to translate the ORF on the tmRNA; the nascent peptide is terminated with the 'tag peptide' encoded by the tmRNA and targeted for degradation. The ribosome is freed to recommence translation, which seems to be the essential function of trans-translation. This Rubrobacter xylanophilus (strain DSM 9941 / JCM 11954 / NBRC 16129 / PRD-1) protein is SsrA-binding protein.